A 492-amino-acid polypeptide reads, in one-letter code: 1-aminocyclopropane-1-carboxylate synthase 1 (492 aa).

N6-(pyridoxal phosphate)lysine is present on lysine 277.

Belongs to the class-I pyridoxal-phosphate-dependent aminotransferase family. Homodimer. Pyridoxal 5'-phosphate is required as a cofactor.

It catalyses the reaction S-adenosyl-L-methionine = 1-aminocyclopropane-1-carboxylate + S-methyl-5'-thioadenosine + H(+). It participates in alkene biosynthesis; ethylene biosynthesis via S-adenosyl-L-methionine; ethylene from S-adenosyl-L-methionine: step 1/2. Functionally, catalyzes the formation of 1-aminocyclopropane-1-carboxylate, a direct precursor of ethylene in higher plants. In Prunus mume (Japanese apricot), this protein is 1-aminocyclopropane-1-carboxylate synthase 1 (ACS1).